The sequence spans 346 residues: Very-long-chain 3-oxoacyl-CoA reductase (346 aa).

The chain crosses the membrane as a helical span at residues G26–V46. V71, D126, D134, N153, Y220, K224, I253, and S255 together coordinate NADP(+). The active-site Proton donor is the Y220. K224 (lowers pKa of active site Tyr) is an active-site residue.

It belongs to the short-chain dehydrogenases/reductases (SDR) family.

Its subcellular location is the endoplasmic reticulum membrane. It catalyses the reaction a very-long-chain (3R)-3-hydroxyacyl-CoA + NADP(+) = a very-long-chain 3-oxoacyl-CoA + NADPH + H(+). The protein operates within lipid metabolism; fatty acid biosynthesis. In terms of biological role, component of the microsomal membrane bound fatty acid elongation system, which produces the 26-carbon very long-chain fatty acids (VLCFA) from palmitate. Catalyzes the reduction of the 3-ketoacyl-CoA intermediate that is formed in each cycle of fatty acid elongation. VLCFAs serve as precursors for ceramide and sphingolipids. This is Very-long-chain 3-oxoacyl-CoA reductase from Aspergillus niger (strain ATCC MYA-4892 / CBS 513.88 / FGSC A1513).